Consider the following 525-residue polypeptide: Apolipoprotein N-acyltransferase 2 (525 aa).

6 helical membrane-spanning segments follow: residues 25–45 (ILNFGSAIAGFSGLVLVYYAL), 56–76 (FLYGFFVSFVHLMSSFWLAFF), 81–101 (IFTLGASTLAYFFIAMPFGFL), 115–135 (FFFAAIWLLWEFAKSTGFLAY), 153–173 (FVDITGVWGLSFIVPLIAACL), and 200–220 (LIFTAFLVLIINIYGITILSI). One can recognise a CN hydrolase domain in the interval 228–486 (LNTVIVQQNT…AESVYTEVPV (259 aa)). Glu-274 serves as the catalytic Proton acceptor. The active site involves Lys-339. Cys-397 acts as the Nucleophile in catalysis. The chain crosses the membrane as a helical span at residues 495 to 515 (ASYKDWLPIMMFLILIFNIFL).

This sequence belongs to the CN hydrolase family. Apolipoprotein N-acyltransferase subfamily.

It localises to the cell inner membrane. It catalyses the reaction N-terminal S-1,2-diacyl-sn-glyceryl-L-cysteinyl-[lipoprotein] + a glycerophospholipid = N-acyl-S-1,2-diacyl-sn-glyceryl-L-cysteinyl-[lipoprotein] + a 2-acyl-sn-glycero-3-phospholipid + H(+). It functions in the pathway protein modification; lipoprotein biosynthesis (N-acyl transfer). Its function is as follows. Catalyzes the phospholipid dependent N-acylation of the N-terminal cysteine of apolipoprotein, the last step in lipoprotein maturation. This chain is Apolipoprotein N-acyltransferase 2, found in Treponema denticola (strain ATCC 35405 / DSM 14222 / CIP 103919 / JCM 8153 / KCTC 15104).